The following is a 602-amino-acid chain: Isocitrate dehydrogenase kinase/phosphatase (602 aa).

Residues 325-331 (APGIKGM) and Lys-346 contribute to the ATP site. Asp-381 is a catalytic residue.

It belongs to the AceK family.

Its subcellular location is the cytoplasm. It catalyses the reaction L-seryl-[isocitrate dehydrogenase] + ATP = O-phospho-L-seryl-[isocitrate dehydrogenase] + ADP + H(+). In terms of biological role, bifunctional enzyme which can phosphorylate or dephosphorylate isocitrate dehydrogenase (IDH) on a specific serine residue. This is a regulatory mechanism which enables bacteria to bypass the Krebs cycle via the glyoxylate shunt in response to the source of carbon. When bacteria are grown on glucose, IDH is fully active and unphosphorylated, but when grown on acetate or ethanol, the activity of IDH declines drastically concomitant with its phosphorylation. The polypeptide is Isocitrate dehydrogenase kinase/phosphatase (Paracidovorax citrulli (strain AAC00-1) (Acidovorax citrulli)).